The primary structure comprises 254 residues: Ferritin, chloroplastic (254 aa).

Residues 1–48 constitute a chloroplast transit peptide; that stretch reads MALAPSKVSPFSGFSLSDGVGAVRNPTCSVSLSFLNKKVGSRNLGVSA. Positions 49-81 are extension peptide (EP); the sequence is STVPLTGVIFEPFEEVKKEELAVPTAGQVSLAR. A Ferritin-like diiron domain is found at 82–235; the sequence is QYYADECESA…EYVAQLRMVG (154 aa). Residues E99, E134, H137, E183, and Q217 each contribute to the Fe cation site.

Belongs to the ferritin family. Oligomer of 24 subunits. There are two types of subunits: L (light) chain and H (heavy) chain. The major chain can be light or heavy, depending on the species and tissue type. The functional molecule forms a roughly spherical shell with a diameter of 12 nm and contains a central cavity into which the insoluble mineral iron core is deposited.

It is found in the plastid. The protein resides in the chloroplast. It carries out the reaction 4 Fe(2+) + O2 + 4 H(+) = 4 Fe(3+) + 2 H2O. In terms of biological role, stores iron in a soluble, non-toxic, readily available form. Important for iron homeostasis. Has ferroxidase activity. Iron is taken up in the ferrous form and deposited as ferric hydroxides after oxidation. The sequence is that of Ferritin, chloroplastic (PFE) from Phaseolus vulgaris (Kidney bean).